The following is a 30-amino-acid chain: Dermaseptin-DI4 (30 aa).

In terms of tissue distribution, expressed by the skin glands.

The protein localises to the secreted. Its function is as follows. Antibacterial activity against Gram-positive bacteria S.aureus and E.faecalis, and Gram-negative bacteria P.aeruginosa and E.coli. This chain is Dermaseptin-DI4, found in Phyllomedusa distincta (Monkey frog).